Here is a 158-residue protein sequence, read N- to C-terminus: MVYFVAFFCFAITLHNIEEAIWLPEWSQQSSKFQKPVTSNEFHFAVIVITMLAYLSAFGFLYMPESDIAKWIFIGFLGSMVINAIFPHLIATVVMKKYAPGLLTGLLLNIPVNSLVIYQMFLKNLIVWKELIISTLVVGIILLALIPLLFKVGDKVSP.

4 helical membrane passes run 42–62, 71–91, 102–122, and 130–150; these read FHFAVIVITMLAYLSAFGFLY, WIFIGFLGSMVINAIFPHLIA, LLTGLLLNIPVNSLVIYQMFL, and ELIISTLVVGIILLALIPLLF.

It localises to the cell membrane. This is an uncharacterized protein from Bacillus subtilis (strain 168).